The primary structure comprises 186 residues: MVASRDTAWLLVGQVVAAHGLRGWLRVKCWSDFPERLTEPGPRWLQRDSDPEPLLHPLIEGQFFPAKGLYLVRLEGIPDRTAAEAWVGAKVLVPASQRLPLEPEEYHYSDLIGLAVYHQGRLLGHVSAIWAAGQDVLEIATPDKRQVLIPFVKALVPVVDLEKGELQVQPPPGLVESFLGQDRARN.

Residues 103–174 (PEEYHYSDLI…ELQVQPPPGL (72 aa)) enclose the PRC barrel domain.

Belongs to the RimM family. Binds ribosomal protein uS19.

It localises to the cytoplasm. Its function is as follows. An accessory protein needed during the final step in the assembly of 30S ribosomal subunit, possibly for assembly of the head region. Essential for efficient processing of 16S rRNA. May be needed both before and after RbfA during the maturation of 16S rRNA. It has affinity for free ribosomal 30S subunits but not for 70S ribosomes. This chain is Ribosome maturation factor RimM, found in Synechococcus sp. (strain JA-3-3Ab) (Cyanobacteria bacterium Yellowstone A-Prime).